The following is a 552-amino-acid chain: Protein FAM234A (552 aa).

The tract at residues 1-40 (MMDDKDLEAEIHPLKNEDKKSQENLGNLPKTEDNLKNKPV) is disordered. Residues 1–49 (MMDDKDLEAEIHPLKNEDKKSQENLGNLPKTEDNLKNKPVPSRLSRCRT) lie on the Cytoplasmic side of the membrane. A compositionally biased stretch (basic and acidic residues) spans 8–22 (EAEIHPLKNEDKKSQ). Ser-21 is subject to Phosphoserine. A helical; Signal-anchor for type II membrane protein transmembrane segment spans residues 50–70 (VAFFLSLFICLFVVFVLSFII). The Extracellular portion of the chain corresponds to 71 to 552 (PCPDRPSSED…FSRLRYRSEV (482 aa)). N-linked (GlcNAc...) asparagine glycans are attached at residues Asn-116, Asn-119, Asn-314, and Asn-473.

This sequence belongs to the FAM234 family.

The protein localises to the membrane. This chain is Protein FAM234A (Fam234a), found in Rattus norvegicus (Rat).